The sequence spans 388 residues: Chorismate synthase (388 aa).

The NADP(+) site is built by Arg39 and Arg45. Positions Glu95–Gly115 are disordered. Basic residues predominate over residues Lys98–Pro108. FMN-binding positions include Arg130–Ser132, Asn251–Ala252, Gly296, Lys311–Thr315, and Arg337.

It belongs to the chorismate synthase family. Homotetramer. It depends on FMNH2 as a cofactor.

The enzyme catalyses 5-O-(1-carboxyvinyl)-3-phosphoshikimate = chorismate + phosphate. It functions in the pathway metabolic intermediate biosynthesis; chorismate biosynthesis; chorismate from D-erythrose 4-phosphate and phosphoenolpyruvate: step 7/7. Catalyzes the anti-1,4-elimination of the C-3 phosphate and the C-6 proR hydrogen from 5-enolpyruvylshikimate-3-phosphate (EPSP) to yield chorismate, which is the branch point compound that serves as the starting substrate for the three terminal pathways of aromatic amino acid biosynthesis. This reaction introduces a second double bond into the aromatic ring system. The polypeptide is Chorismate synthase (Enterococcus faecalis (strain ATCC 700802 / V583)).